The following is a 136-amino-acid chain: Large ribosomal subunit protein uL16 (136 aa).

The protein belongs to the universal ribosomal protein uL16 family. Part of the 50S ribosomal subunit.

Functionally, binds 23S rRNA and is also seen to make contacts with the A and possibly P site tRNAs. The polypeptide is Large ribosomal subunit protein uL16 (Shewanella denitrificans (strain OS217 / ATCC BAA-1090 / DSM 15013)).